Reading from the N-terminus, the 141-residue chain is Putative antiporter subunit mnhB2 (141 aa).

A run of 4 helical transmembrane segments spans residues 10-30 (TVTKIVVFILLTFGFYVFFAG), 35-55 (GGGFIGGLIFSSAFILMFLAF), 70-90 (KLMIVGAIISALTAIVPVFFG), and 116-136 (LFELGILLTVVGVIVTIMLAL).

This sequence belongs to the CPA3 antiporters (TC 2.A.63) subunit B family. May form a heterooligomeric complex that consists of seven subunits: mnhA2, mnhB2, mnhC2, mnhD2, mnhE2, mnhF2 and mnhG2.

The protein localises to the cell membrane. The polypeptide is Putative antiporter subunit mnhB2 (mnhB2) (Staphylococcus haemolyticus (strain JCSC1435)).